The following is a 160-amino-acid chain: SsrA-binding protein (160 aa).

The interval 1–23 (MARKKKQDKGQGPKTIAQNRRAR) is disordered.

It belongs to the SmpB family.

It localises to the cytoplasm. Its function is as follows. Required for rescue of stalled ribosomes mediated by trans-translation. Binds to transfer-messenger RNA (tmRNA), required for stable association of tmRNA with ribosomes. tmRNA and SmpB together mimic tRNA shape, replacing the anticodon stem-loop with SmpB. tmRNA is encoded by the ssrA gene; the 2 termini fold to resemble tRNA(Ala) and it encodes a 'tag peptide', a short internal open reading frame. During trans-translation Ala-aminoacylated tmRNA acts like a tRNA, entering the A-site of stalled ribosomes, displacing the stalled mRNA. The ribosome then switches to translate the ORF on the tmRNA; the nascent peptide is terminated with the 'tag peptide' encoded by the tmRNA and targeted for degradation. The ribosome is freed to recommence translation, which seems to be the essential function of trans-translation. This Thermobifida fusca (strain YX) protein is SsrA-binding protein.